A 196-amino-acid chain; its full sequence is Carnitine operon protein CaiE (196 aa).

The interval 174–196 (QPLRQMEENRPRLQGTTDVTPKR) is disordered. Over residues 187 to 196 (QGTTDVTPKR) the composition is skewed to polar residues.

The protein belongs to the transferase hexapeptide repeat family.

Its pathway is amine and polyamine metabolism; carnitine metabolism. Overproduction of CaiE stimulates the activity of CaiB and CaiD. The polypeptide is Carnitine operon protein CaiE (caiE) (Escherichia coli (strain K12)).